The chain runs to 461 residues: Protein-serine O-palmitoleoyltransferase porcupine (461 aa).

At Met-1–Cys-17 the chain is on the cytoplasmic side. Residues Leu-18–Ala-38 form a helical membrane-spanning segment. The Extracellular segment spans residues Cys-39–His-66. A helical membrane pass occupies residues Phe-67–Phe-87. The Cytoplasmic portion of the chain corresponds to Leu-88–Arg-95. The chain crosses the membrane as a helical span at residues Gly-96 to Asp-116. Over Thr-117–Pro-152 the chain is Extracellular. The helical transmembrane segment at Val-153–Phe-173 threads the bilayer. The Cytoplasmic portion of the chain corresponds to His-174 to Ala-198. The helical transmembrane segment at Leu-199–Ile-219 threads the bilayer. Residues Pro-220–His-252 lie on the Extracellular side of the membrane. Residues Phe-253–Phe-273 traverse the membrane as a helical segment. Residues Thr-274 to Ser-337 lie on the Cytoplasmic side of the membrane. The helical transmembrane segment at Ala-338 to Thr-358 threads the bilayer. His-341 is a catalytic residue. Residues Tyr-359–Arg-396 lie on the Extracellular side of the membrane. A helical transmembrane segment spans residues Ala-397–Phe-417. At Asp-418–Gly-461 the chain is on the cytoplasmic side.

The protein belongs to the membrane-bound acyltransferase family. Porcupine subfamily. Interacts with WNT1, WNT3, WNT3A, WNT4, WNT5A, WNT5B, WNT6, WNT7A and WNT7B. In terms of tissue distribution, expressed in brain, heart, kidney, liver, lung, muscle, spleen and testis. Isoform 4 is strongly expressed in kidney, liver, lung, spleen and testis. Isoform 1 is strongly expressed in brain, heart and muscle and poorly in kidney, liver, lung, spleen and testis.

The protein resides in the endoplasmic reticulum membrane. The catalysed reaction is [Wnt protein]-L-serine + (9Z)-hexadecenoyl-CoA = [Wnt protein]-O-(9Z)-hexadecenoyl-L-serine + CoA. Its function is as follows. Protein-serine O-palmitoleoyltransferase that acts as a key regulator of the Wnt signaling pathway by mediating the attachment of palmitoleate, a 16-carbon monounsaturated fatty acid (C16:1(9Z)), to Wnt proteins. Serine palmitoleoylation of WNT proteins is required for efficient binding to frizzled receptors. This Mus musculus (Mouse) protein is Protein-serine O-palmitoleoyltransferase porcupine.